Reading from the N-terminus, the 437-residue chain is Methylenetetrahydrofolate--tRNA-(uracil-5-)-methyltransferase TrmFO (437 aa).

Residue 10–15 (GGGLAG) participates in FAD binding.

The protein belongs to the MnmG family. TrmFO subfamily. FAD serves as cofactor.

Its subcellular location is the cytoplasm. It catalyses the reaction uridine(54) in tRNA + (6R)-5,10-methylene-5,6,7,8-tetrahydrofolate + NADH + H(+) = 5-methyluridine(54) in tRNA + (6S)-5,6,7,8-tetrahydrofolate + NAD(+). The catalysed reaction is uridine(54) in tRNA + (6R)-5,10-methylene-5,6,7,8-tetrahydrofolate + NADPH + H(+) = 5-methyluridine(54) in tRNA + (6S)-5,6,7,8-tetrahydrofolate + NADP(+). Functionally, catalyzes the folate-dependent formation of 5-methyl-uridine at position 54 (M-5-U54) in all tRNAs. The sequence is that of Methylenetetrahydrofolate--tRNA-(uracil-5-)-methyltransferase TrmFO from Geotalea daltonii (strain DSM 22248 / JCM 15807 / FRC-32) (Geobacter daltonii).